A 552-amino-acid chain; its full sequence is Lon protease 2 (552 aa).

Residue 97–104 coordinates ATP; sequence GPPGVGKT. A Lon proteolytic domain is found at 349-535; that stretch reads EPQVGIVNGL…QEVLDEILVN (187 aa). Active-site residues include Ser445 and Lys488.

The protein belongs to the peptidase S16 family. As to quaternary structure, homohexamer. Organized in a ring with a central cavity.

The protein resides in the cytoplasm. It carries out the reaction Hydrolysis of proteins in presence of ATP.. In terms of biological role, ATP-dependent serine protease that mediates the selective degradation of mutant and abnormal proteins as well as certain short-lived regulatory proteins. Required for cellular homeostasis and for survival from DNA damage and developmental changes induced by stress. Degrades polypeptides processively to yield small peptide fragments that are 5 to 10 amino acids long. Binds to DNA in a double-stranded, site-specific manner. In Bacillus subtilis (strain 168), this protein is Lon protease 2 (lon2).